We begin with the raw amino-acid sequence, 344 residues long: Holliday junction branch migration complex subunit RuvB (344 aa).

Positions 1-183 are large ATPase domain (RuvB-L); the sequence is MPDRELISGD…FGLVLRLDPY (183 aa). Residues L22, R23, G64, K67, T68, T69, 130-132, R173, Y183, and R220 each bind ATP; that span reads EDF. T68 is a binding site for Mg(2+). A small ATPAse domain (RuvB-S) region spans residues 184–254; it reads NTEELKAIVK…VAQTALNLLD (71 aa). A head domain (RuvB-H) region spans residues 257 to 344; that stretch reads RYGLDEIDQK…EGDHPSLFEA (88 aa). 2 residues coordinate DNA: R312 and R317.

The protein belongs to the RuvB family. As to quaternary structure, homohexamer. Forms an RuvA(8)-RuvB(12)-Holliday junction (HJ) complex. HJ DNA is sandwiched between 2 RuvA tetramers; dsDNA enters through RuvA and exits via RuvB. An RuvB hexamer assembles on each DNA strand where it exits the tetramer. Each RuvB hexamer is contacted by two RuvA subunits (via domain III) on 2 adjacent RuvB subunits; this complex drives branch migration. In the full resolvosome a probable DNA-RuvA(4)-RuvB(12)-RuvC(2) complex forms which resolves the HJ.

It is found in the cytoplasm. The enzyme catalyses ATP + H2O = ADP + phosphate + H(+). In terms of biological role, the RuvA-RuvB-RuvC complex processes Holliday junction (HJ) DNA during genetic recombination and DNA repair, while the RuvA-RuvB complex plays an important role in the rescue of blocked DNA replication forks via replication fork reversal (RFR). RuvA specifically binds to HJ cruciform DNA, conferring on it an open structure. The RuvB hexamer acts as an ATP-dependent pump, pulling dsDNA into and through the RuvAB complex. RuvB forms 2 homohexamers on either side of HJ DNA bound by 1 or 2 RuvA tetramers; 4 subunits per hexamer contact DNA at a time. Coordinated motions by a converter formed by DNA-disengaged RuvB subunits stimulates ATP hydrolysis and nucleotide exchange. Immobilization of the converter enables RuvB to convert the ATP-contained energy into a lever motion, pulling 2 nucleotides of DNA out of the RuvA tetramer per ATP hydrolyzed, thus driving DNA branch migration. The RuvB motors rotate together with the DNA substrate, which together with the progressing nucleotide cycle form the mechanistic basis for DNA recombination by continuous HJ branch migration. Branch migration allows RuvC to scan DNA until it finds its consensus sequence, where it cleaves and resolves cruciform DNA. The protein is Holliday junction branch migration complex subunit RuvB of Solibacter usitatus (strain Ellin6076).